A 577-amino-acid polypeptide reads, in one-letter code: Nuclear receptor subfamily 4 group A member 1 (577 aa).

Positions 243–318 form a DNA-binding region, nuclear receptor; sequence EGRCAVCGDN…VGMVKEVVRT (76 aa). NR C4-type zinc fingers lie at residues 246-266 and 282-311; these read CAVCGDNASCQHYGVRTCEGC and CLANKDCPVDKRRRNRCQFCRFQKCLVVGM. Positions 247-333 are required for binding NBRE-containing DNA; that stretch reads AVCGDNASCQ…RRGRLPSKPK (87 aa). The NR LBD domain occupies 339–574; the sequence is SPVDLINSLV…PIVDKIFMDT (236 aa). Positions 500-523 are may bind lipopolysaccharide; that stretch reads PKKVEELQSQIINCLKEHIPSSMN. The interval 563–574 is AF-2; sequence PPPIVDKIFMDT.

The protein belongs to the nuclear hormone receptor family. NR4 subfamily. Zn(2+) serves as cofactor.

It localises to the nucleus. The protein localises to the cytoplasm. The protein resides in the cytosol. Orphan nuclear receptor. Binds the NGFI-B response element (NBRE) 5'-AAAAGGTCA-3'. In terms of biological role, in the cytosol, may detect bacterial lipopolysaccharide (LPS) and NBRE-containing mitochondrial DNA released during pyroptosis, and play a role in non-canonical inflammasome activation. The polypeptide is Nuclear receptor subfamily 4 group A member 1 (nr4a1) (Xenopus laevis (African clawed frog)).